The sequence spans 159 residues: Cytochrome b6-f complex subunit 4 (159 aa).

3 helical membrane passes run 36–56, 95–115, and 131–151; these read LLYI…GLAV, LLGV…PFLE, and TVFL…TLPI.

This sequence belongs to the cytochrome b family. PetD subfamily. The 4 large subunits of the cytochrome b6-f complex are cytochrome b6, subunit IV (17 kDa polypeptide, petD), cytochrome f and the Rieske protein, while the 4 small subunits are petG, petL, petM and petN. The complex functions as a dimer.

It localises to the plastid. The protein resides in the chloroplast thylakoid membrane. Functionally, component of the cytochrome b6-f complex, which mediates electron transfer between photosystem II (PSII) and photosystem I (PSI), cyclic electron flow around PSI, and state transitions. This Piper cenocladum (Ant piper) protein is Cytochrome b6-f complex subunit 4.